The sequence spans 285 residues: N(G),N(G)-dimethylarginine dimethylaminohydrolase 1 (285 aa).

Residue Ala-2 is modified to N-acetylalanine. Residues Leu-30, Asp-73, Glu-78, Asp-79, Arg-98, and Arg-145 each contribute to the substrate site. The Proton donor role is filled by His-173. Cys-222 carries the S-nitrosocysteine modification. Val-268 is a substrate binding site. Cys-274 carries the post-translational modification S-nitrosocysteine. The Nucleophile role is filled by Cys-274. Zn(2+) is bound at residue Cys-274.

As to quaternary structure, monomer. As to expression, widely distributed, highest concentrations found in brain, brain cortex and kidney (at protein level).

It catalyses the reaction N(omega),N(omega)-dimethyl-L-arginine + H2O = dimethylamine + L-citrulline. The catalysed reaction is N(omega)-methyl-L-arginine + H2O = L-citrulline + methylamine. Its activity is regulated as follows. Copurifies with a tightly bound zinc ion. Activated by release of zinc. His and other agents that promote the release of bound zinc ions activate the enzyme (in vitro). Inhibited by S-nitrosylation. Zinc protects the protein against S-nitrosylation. Functionally, hydrolyzes N(G),N(G)-dimethyl-L-arginine (ADMA) and N(G)-monomethyl-L-arginine (MMA) which act as inhibitors of NOS. Has therefore a role in the regulation of nitric oxide generation. The polypeptide is N(G),N(G)-dimethylarginine dimethylaminohydrolase 1 (DDAH1) (Bos taurus (Bovine)).